The primary structure comprises 110 residues: Large ribosomal subunit protein uL22 (110 aa).

The protein belongs to the universal ribosomal protein uL22 family. As to quaternary structure, part of the 50S ribosomal subunit.

In terms of biological role, this protein binds specifically to 23S rRNA; its binding is stimulated by other ribosomal proteins, e.g. L4, L17, and L20. It is important during the early stages of 50S assembly. It makes multiple contacts with different domains of the 23S rRNA in the assembled 50S subunit and ribosome. Functionally, the globular domain of the protein is located near the polypeptide exit tunnel on the outside of the subunit, while an extended beta-hairpin is found that lines the wall of the exit tunnel in the center of the 70S ribosome. The polypeptide is Large ribosomal subunit protein uL22 (Vesicomyosocius okutanii subsp. Calyptogena okutanii (strain HA)).